The chain runs to 549 residues: MLNQKIQNPNPDELMIEVDLCYELDPYELKLDEMIEAEPEPEMIEGLPASDALTPADRYLELFEHVQSEKIFPDSKTFPDCAPKMDPLDILIRYRKVRRHRDFDLRKFVENHFWLPEVYSSEYVSDPQNSLKEHIDQLWPVLTREPQDHIPWSSLLALPQSYIVPGGRFSETYYWDSYFTMLGLAESGREDLLKCMADNFAWMIENYGHIPNGNRTYYLSRSQPPVFALMVELFEEDGVRGARRYLDHLKMEYAFWMDGAESLIPNQAYRHVVRMPDGSLLNRYWDDRDTPRDESWLEDVETAKHSGRPPNEVYRDLRAGAASGWDYSSRWLRDTGRLASIRTTQFIPIDLNAFLFKLESAIANISALKGEKETEALFRQKASARRDAVNRYLWDDENGIYRDYDWRREQLALFSAAAIVPLYVGMANHEQADRLANAVRSRLLTPGGILASEYETGEQWDKPNGWAPLQWMAIQGFKMYGDDLLGDEIARNWLKTVNQFYLEQHKLIEKYHIADGVPREGGGGEYPLQDGFGWTNGVVRRLIGLYGEP.

Substrate-binding positions include Arg168, Trp175–Asp176, Asn212, Arg221–Gln223, Arg292–Glu294, and Gly324. Residues Asp326 and Glu509 each act as proton donor/acceptor in the active site. Residue Glu525 participates in substrate binding.

Belongs to the glycosyl hydrolase 37 family. As to quaternary structure, monomer.

Its subcellular location is the cytoplasm. The enzyme catalyses alpha,alpha-trehalose + H2O = alpha-D-glucose + beta-D-glucose. It functions in the pathway glycan degradation; trehalose degradation; D-glucose from alpha,alpha-trehalose: step 1/1. Its function is as follows. Hydrolyzes trehalose to glucose. Could be involved, in cells returning to low osmolarity conditions, in the utilization of the accumulated cytoplasmic trehalose, which was synthesized in response to high osmolarity. This Escherichia coli O81 (strain ED1a) protein is Cytoplasmic trehalase.